Reading from the N-terminus, the 190-residue chain is UPF0316 protein Mboo_0605 (190 aa).

The next 3 helical transmembrane spans lie at 3–23, 41–61, and 67–87; these read IGTF…RIAE, LAAY…GLVL, and FWNL…GMEI.

This sequence belongs to the UPF0316 family.

It is found in the cell membrane. The polypeptide is UPF0316 protein Mboo_0605 (Methanoregula boonei (strain DSM 21154 / JCM 14090 / 6A8)).